A 64-amino-acid polypeptide reads, in one-letter code: Conotoxin Pu3.4 (64 aa).

An N-terminal signal peptide occupies residues 1–16 (LGVLLPICLLLFPLTA). Positions 17-49 (LPLDGDQPADRPAERMQDDFITEQHPLFDPVKR) are excised as a propeptide. Intrachain disulfides connect C50–C63, C51–C59, and C55–C62. P61 carries the post-translational modification 4-hydroxyproline.

This sequence belongs to the conotoxin M superfamily. As to expression, expressed by the venom duct.

The protein localises to the secreted. The sequence is that of Conotoxin Pu3.4 from Conus pulicarius (Flea-bitten cone).